The chain runs to 294 residues: Filamin-B (294 aa).

2 Filamin repeats span residues 1-67 (GTRL…KVRV) and 71-163 (GQAG…KAKV). Phosphoserine occurs at positions 61 and 157. A Glycyl lysine isopeptide (Lys-Gly) (interchain with G-Cter in ISG15) cross-link involves residue Lys160. Positions 164–198 (TGQRLVGPGSTNETSSILVESVTRSSTETCYSAIP) are hinge 2. The segment at 164–294 (TGQRLVGPGS…PGSPFHVTVP (131 aa)) is self-association site, tail. Ser173 and Ser184 each carry phosphoserine. The Filamin 24 repeat unit spans residues 199 to 293 (KASSDASKVT…IPGSPFHVTV (95 aa)). Lys210 and Lys216 each carry N6-succinyllysine. Lys268 is subject to N6-acetyllysine.

The protein belongs to the filamin family. In terms of assembly, homodimer. Interacts with FLNA, FLNC, INPPL1, ITGB1A, ITGB1D, ITGB3, ITGB6, MYOT, MYOZ1, PSEN1 and PSEN2. Interacts with MICALL2. Interacts with RFLNA and RFLNB. Interacts with HTLV-I viral p13 protein. Interacts with ASB2; the interaction targets FLNB for proteasomal degradation. Post-translationally, ISGylation prevents ability to interact with the upstream activators of the JNK cascade and inhibits IFNA-induced JNK signaling. Ubiquitination by a SCF-like complex containing ASB2 leads to proteasomal degradation which promotes muscle differentiation.

The protein resides in the cytoplasm. It is found in the cell cortex. It localises to the cytoskeleton. Its subcellular location is the myofibril. The protein localises to the sarcomere. The protein resides in the z line. In terms of biological role, connects cell membrane constituents to the actin cytoskeleton. May promote orthogonal branching of actin filaments and links actin filaments to membrane glycoproteins. Anchors various transmembrane proteins to the actin cytoskeleton. This is Filamin-B (FLNB) from Oryctolagus cuniculus (Rabbit).